Consider the following 162-residue polypeptide: MANVFFDVQFGGDAPKKIVFKLYDDVVPKTAANFRELATGSRGFGYKGSVFHRVITDFMAQGGDFTNFNGTGGKSIYGEKFADENFKLKHTKPALLSMANAGPNTNGSQFFITFVPCPWLDGKHVVFGEVVDGFDTLELFKKNSSQQGKPKTTIKIVDSGVV.

Residues 5 to 161 (FFDVQFGGDA…TTIKIVDSGV (157 aa)) form the PPIase cyclophilin-type domain.

This sequence belongs to the cyclophilin-type PPIase family. PPIase A subfamily.

It carries out the reaction [protein]-peptidylproline (omega=180) = [protein]-peptidylproline (omega=0). Its activity is regulated as follows. Binds cyclosporin A (CsA). CsA mediates some of its effects via an inhibitory action on PPIase. Functionally, PPIases accelerate the folding of proteins. It catalyzes the cis-trans isomerization of proline imidic peptide bonds in oligopeptides. This is Peptidyl-prolyl cis-trans isomerase from Paramecium primaurelia.